The chain runs to 383 residues: Chaperone protein DnaJ (383 aa).

Positions 5-70 (DYYEVLGVAK…EKRAAYDRFG (66 aa)) constitute a J domain. The CR-type zinc finger occupies 139 to 217 (GKTETIRIPT…CSGAGRVNRE (79 aa)). Zn(2+) is bound by residues Cys-152, Cys-155, Cys-169, Cys-172, Cys-191, Cys-194, Cys-205, and Cys-208. CXXCXGXG motif repeat units lie at residues 152-159 (CEACSGTG), 169-176 (CSTCGGYG), 191-198 (CPNCHGRG), and 205-212 (CTACSGAG).

This sequence belongs to the DnaJ family. In terms of assembly, homodimer. Zn(2+) serves as cofactor.

It localises to the cytoplasm. Functionally, participates actively in the response to hyperosmotic and heat shock by preventing the aggregation of stress-denatured proteins and by disaggregating proteins, also in an autonomous, DnaK-independent fashion. Unfolded proteins bind initially to DnaJ; upon interaction with the DnaJ-bound protein, DnaK hydrolyzes its bound ATP, resulting in the formation of a stable complex. GrpE releases ADP from DnaK; ATP binding to DnaK triggers the release of the substrate protein, thus completing the reaction cycle. Several rounds of ATP-dependent interactions between DnaJ, DnaK and GrpE are required for fully efficient folding. Also involved, together with DnaK and GrpE, in the DNA replication of plasmids through activation of initiation proteins. The protein is Chaperone protein DnaJ of Methylorubrum populi (strain ATCC BAA-705 / NCIMB 13946 / BJ001) (Methylobacterium populi).